We begin with the raw amino-acid sequence, 924 residues long: MRADLITIQQTLTPEAATVLNQSIAEATRRNHGHTTPLHVAATLLSSSSGYLRQACIKSHPNSSHPLQCRALELCFSVALERLPTTSTTTTTTSSSSSSSPSQTQEPLLSNALTAALKRAQAHQRRGCPEQQQQPLLAVKVELEQLIISILDDPSVSRVMREASFSSPAVKSAIEQSLIGNSVSNSRQTGSPGIINPSAIGFGYRSVPAPVNRNLYLNPRLQQPGVGMQSGMMIQRTDEAKRVIEIMIRTRKRNPVLVGDSEPHILVKEILEKIENGEFSDGALRNFQVIRLEKELVSQLATRLGEISGLVETRIGGGGVVLDLGDLKWLVEHPAANGGAVVEMRKLLERYKGRLCFIGTATCETYLRCQVYYPSMENDWDLQAIPIAAKSSLPAIFPRLGSNNNNNAMLLSNNIISIESISPTRSFQIPMSKMSCCSRCLQSYENDVAKVEKDLTGDNRSVLPQWLQNAKANDDGDKKLTKDQQIVELQKKWNDLCLRLHPNQSVSERIAPSTLSMMKINTRSDITPPGSPVGTDLVLGRPNRGLSSPEKKTREARFGKLGDSFDIDLFKKLLKGLAKSVWWQHDAASSVAAAITECKHGNGKSKGDIWLMFTGPDRAGKSKMASALSDLVSGSQPITISLGSSSRMDDGLNIRGKTALDRFAEAVRRNPFAVIVLEDIDEADILLRNNVKIAIERGRICDSYGREVSLGNVIIILTANSSLGSAKNVASIDETRLESLVNKGWELRLSVCNSSKTRKRKPNWLYSDNDQTKQRKEICFDLNEAAEFDSSSDVTVEHDQEDNGNLVHKLVGLVDDAILFRPVDFDSIKSKTAESLKKRFSNGLADGLTVEIEDDALERIAGAIWLSKISLEEWLEEAMGSSLNSVKSRVSSSEDSVIRIELEDDLNDRISGGYLPSSIRTVVV.

In terms of domain architecture, Clp R spans 8 to 181 (IQQTLTPEAA…SAIEQSLIGN (174 aa)). The tract at residues 12–83 (LTPEAATVLN…LCFSVALERL (72 aa)) is repeat 1. The segment covering 86-105 (TSTTTTTTSSSSSSSPSQTQ) has biased composition (low complexity). Positions 86-107 (TSTTTTTTSSSSSSSPSQTQEP) are disordered. The interval 109–181 (LSNALTAALK…SAIEQSLIGN (73 aa)) is repeat 2. The interval 522–552 (TRSDITPPGSPVGTDLVLGRPNRGLSSPEKK) is disordered. The short motif at 780-784 (FDLNE) is the EAR element.

It belongs to the ClpA/ClpB family. In terms of assembly, interacts probably with TPL/TPR in an EAR-motif dependent manner. Expressed in seedlings and leaves. Detected in roots and axillary branches.

Functionally, probable component of a transcriptional corepressor complex that acts specifically in the karrikin pathway. Controls seedling growth redundantly with SMAX1, but is not involved in leaf morphology, shoot branching or germination control. In Arabidopsis thaliana (Mouse-ear cress), this protein is Protein SMAX1-LIKE 2.